We begin with the raw amino-acid sequence, 411 residues long: Phosphopentomutase (411 aa).

6 residues coordinate Mn(2+): D14, D306, H311, D347, H348, and H359.

The protein belongs to the phosphopentomutase family. The cofactor is Mn(2+).

It localises to the cytoplasm. It catalyses the reaction 2-deoxy-alpha-D-ribose 1-phosphate = 2-deoxy-D-ribose 5-phosphate. The catalysed reaction is alpha-D-ribose 1-phosphate = D-ribose 5-phosphate. The protein operates within carbohydrate degradation; 2-deoxy-D-ribose 1-phosphate degradation; D-glyceraldehyde 3-phosphate and acetaldehyde from 2-deoxy-alpha-D-ribose 1-phosphate: step 1/2. Functionally, isomerase that catalyzes the conversion of deoxy-ribose 1-phosphate (dRib-1-P) and ribose 1-phosphate (Rib-1-P) to deoxy-ribose 5-phosphate (dRib-5-P) and ribose 5-phosphate (Rib-5-P), respectively. The sequence is that of Phosphopentomutase from Lactococcus lactis subsp. lactis (strain IL1403) (Streptococcus lactis).